The primary structure comprises 176 residues: Ribosome maturation factor RimM (176 aa).

Residues 97–176 (EDEFYWRDLI…QILVDWDPDF (80 aa)) form the PRC barrel domain.

The protein belongs to the RimM family. Binds ribosomal protein uS19.

It is found in the cytoplasm. An accessory protein needed during the final step in the assembly of 30S ribosomal subunit, possibly for assembly of the head region. Essential for efficient processing of 16S rRNA. May be needed both before and after RbfA during the maturation of 16S rRNA. It has affinity for free ribosomal 30S subunits but not for 70S ribosomes. In Shewanella putrefaciens (strain CN-32 / ATCC BAA-453), this protein is Ribosome maturation factor RimM.